Here is a 430-residue protein sequence, read N- to C-terminus: Serine--tRNA ligase (430 aa).

L-serine is bound at residue 236-238; sequence TAE. Residue 267–269 participates in ATP binding; it reads RRE. Glu-290 contacts L-serine. 354–357 is an ATP binding site; that stretch reads EISS. L-serine is bound at residue Ser-390.

The protein belongs to the class-II aminoacyl-tRNA synthetase family. Type-1 seryl-tRNA synthetase subfamily. In terms of assembly, homodimer. The tRNA molecule binds across the dimer.

The protein resides in the cytoplasm. It carries out the reaction tRNA(Ser) + L-serine + ATP = L-seryl-tRNA(Ser) + AMP + diphosphate + H(+). It catalyses the reaction tRNA(Sec) + L-serine + ATP = L-seryl-tRNA(Sec) + AMP + diphosphate + H(+). It functions in the pathway aminoacyl-tRNA biosynthesis; selenocysteinyl-tRNA(Sec) biosynthesis; L-seryl-tRNA(Sec) from L-serine and tRNA(Sec): step 1/1. In terms of biological role, catalyzes the attachment of serine to tRNA(Ser). Is also able to aminoacylate tRNA(Sec) with serine, to form the misacylated tRNA L-seryl-tRNA(Sec), which will be further converted into selenocysteinyl-tRNA(Sec). The polypeptide is Serine--tRNA ligase (Gloeothece citriformis (strain PCC 7424) (Cyanothece sp. (strain PCC 7424))).